The chain runs to 217 residues: MSEPLGLFGGTFDPVHFGHLRLAEESIAHLGLGGVRWIPAGQPPHRGVPQVTAQQRLEMVRLAMANNARFSLDPSEVEAEAPSYTVHTLERLRRELGPLQSLVLLVGADAFAGLATWHRWRDIFALAHVAVSHRPGFPVEISSLPHELASEFTDRRRADVRGLKASPAGGIVTFAMTQLAISATQIRKLLANELSARYLLPDSVLDYIQTHSLYRNS.

It belongs to the NadD family.

The catalysed reaction is nicotinate beta-D-ribonucleotide + ATP + H(+) = deamido-NAD(+) + diphosphate. It participates in cofactor biosynthesis; NAD(+) biosynthesis; deamido-NAD(+) from nicotinate D-ribonucleotide: step 1/1. Functionally, catalyzes the reversible adenylation of nicotinate mononucleotide (NaMN) to nicotinic acid adenine dinucleotide (NaAD). This Dechloromonas aromatica (strain RCB) protein is Probable nicotinate-nucleotide adenylyltransferase.